The primary structure comprises 130 residues: uncharacterized protein (130 aa).

The disordered stretch occupies residues 1 to 62 (MRMYSSDAHE…ASGVGSSCKR (62 aa)). Over residues 21 to 30 (PPHPLPPTGS) the composition is skewed to pro residues.

This is an uncharacterized protein from Homo sapiens (Human).